A 300-amino-acid polypeptide reads, in one-letter code: uncharacterized protein (300 aa).

10 consecutive transmembrane segments (helical) span residues Ile4–Met24, Ile31–Leu51, Phe68–Gly88, Ile95–Leu115, Asn120–Ile140, Cys146–Ile166, Val177–Ile197, Ile214–Tyr234, Phe242–Ile262, and Leu272–Phe292. EamA domains are found at residues Ile15–Leu139 and Leu161–Ile287.

This sequence belongs to the EamA transporter family.

It is found in the cell membrane. This is an uncharacterized protein from Buchnera aphidicola subsp. Schizaphis graminum (strain Sg).